The primary structure comprises 556 residues: Vetispiradiene synthase 1 (556 aa).

Mg(2+)-binding residues include D309, D313, D452, T456, and E460. A DDXXD motif motif is present at residues 309 to 313 (DDTFD).

The protein belongs to the terpene synthase family. Tpsa subfamily. Requires Mg(2+) as cofactor.

Its subcellular location is the cytoplasm. It catalyses the reaction (2E,6E)-farnesyl diphosphate = (-)-vetispiradiene + diphosphate. It participates in secondary metabolite biosynthesis; terpenoid biosynthesis. Functionally, sesquiterpene synthase that catalyzes the formation of vetispiradiene from trans,trans-farnesyl diphosphate. The initial internal cyclization produces the monocyclic intermediate germacrene A. The sequence is that of Vetispiradiene synthase 1 (PVS1) from Solanum tuberosum (Potato).